Reading from the N-terminus, the 879-residue chain is Alanine--tRNA ligase (879 aa).

A disordered region spans residues K426–S449. Positions 566, 570, 668, and 672 each coordinate Zn(2+).

This sequence belongs to the class-II aminoacyl-tRNA synthetase family. Requires Zn(2+) as cofactor.

The protein localises to the cytoplasm. The catalysed reaction is tRNA(Ala) + L-alanine + ATP = L-alanyl-tRNA(Ala) + AMP + diphosphate. Its function is as follows. Catalyzes the attachment of alanine to tRNA(Ala) in a two-step reaction: alanine is first activated by ATP to form Ala-AMP and then transferred to the acceptor end of tRNA(Ala). Also edits incorrectly charged Ser-tRNA(Ala) and Gly-tRNA(Ala) via its editing domain. The chain is Alanine--tRNA ligase from Clostridioides difficile (strain 630) (Peptoclostridium difficile).